A 541-amino-acid chain; its full sequence is Phosphoenolpyruvate carboxykinase (ATP) (541 aa).

The substrate site is built by Arg-67, Tyr-207, and Lys-213. ATP-binding positions include Lys-213, His-232, and 248 to 256 (GLSGTGKTT). Mn(2+) contacts are provided by Lys-213 and His-232. Asp-269 contacts Mn(2+). ATP-binding positions include Glu-297, Arg-333, 449-450 (RI), and Thr-455. Substrate is bound at residue Arg-333.

It belongs to the phosphoenolpyruvate carboxykinase (ATP) family. Monomer. Mn(2+) serves as cofactor.

Its subcellular location is the cytoplasm. It carries out the reaction oxaloacetate + ATP = phosphoenolpyruvate + ADP + CO2. It functions in the pathway carbohydrate biosynthesis; gluconeogenesis. Its function is as follows. Involved in the gluconeogenesis. Catalyzes the conversion of oxaloacetate (OAA) to phosphoenolpyruvate (PEP) through direct phosphoryl transfer between the nucleoside triphosphate and OAA. The sequence is that of Phosphoenolpyruvate carboxykinase (ATP) from Vibrio atlanticus (strain LGP32) (Vibrio splendidus (strain Mel32)).